Reading from the N-terminus, the 139-residue chain is ATP synthase epsilon chain (139 aa).

Belongs to the ATPase epsilon chain family. F-type ATPases have 2 components, CF(1) - the catalytic core - and CF(0) - the membrane proton channel. CF(1) has five subunits: alpha(3), beta(3), gamma(1), delta(1), epsilon(1). CF(0) has three main subunits: a, b and c.

Its subcellular location is the cell inner membrane. Produces ATP from ADP in the presence of a proton gradient across the membrane. In Pseudomonas putida (strain ATCC 700007 / DSM 6899 / JCM 31910 / BCRC 17059 / LMG 24140 / F1), this protein is ATP synthase epsilon chain.